The primary structure comprises 848 residues: Glutenin, high molecular weight subunit DX5 (848 aa).

A signal peptide spans 1-21 (MAKRLVLFVAVVVALVALTVA). Residues 124 to 804 (YYPGQASPQR…GQQSGQGQQG (681 aa)) form a disordered region. Low complexity-rich tracts occupy residues 126-137 (PGQASPQRPGQG), 145-166 (QGYYPTSPQQPGQWQQPEQGQP), 173-203 (PQQSGQLQQPAQGQQPGQGQQGQQPGQGQPG), 210-240 (QLQPGQLQQPAQGQQGQQPGQAQQGQQPGQG), 263-303 (QGQQ…GQSG), 310-351 (QQPG…PGQG), 359-411 (PGYY…PGQG), 419-468 (PGYY…PGQG), 476-527 (QGQQ…YPTS), 544-659 (QQPG…QGQP), 670-687 (GQGQQPGQWQQPGQGQPG), 709-727 (QQPGQGQQPGQWQQSGQGQ), and 739-795 (GQGQ…TGQG).

Belongs to the gliadin/glutenin family. As to quaternary structure, disulfide-bridge linked aggregates.

Glutenins are high-molecular weight seed storage proteins of wheat endosperm. Thought to be responsible for the visco-elastic property of wheat dough. This chain is Glutenin, high molecular weight subunit DX5 (GLU-1D-1D), found in Triticum aestivum (Wheat).